A 315-amino-acid polypeptide reads, in one-letter code: Small ribosomal subunit protein mS45 (315 aa).

The transit peptide at 1-66 (MRNSVEFSQL…SKYVACNSRS (66 aa)) directs the protein to the mitochondrion.

The protein belongs to the mitochondrion-specific ribosomal protein mS45 family. In terms of assembly, component of the mitochondrial small ribosomal subunit (mt-SSU). Mature yeast 74S mitochondrial ribosomes consist of a small (37S) and a large (54S) subunit. The 37S small subunit contains a 15S ribosomal RNA (15S mt-rRNA) and at least 32 different proteins. The 54S large subunit contains a 21S rRNA (21S mt-rRNA) and at least 45 different proteins.

It is found in the mitochondrion. Component of the mitochondrial ribosome (mitoribosome), a dedicated translation machinery responsible for the synthesis of mitochondrial genome-encoded proteins, including at least some of the essential transmembrane subunits of the mitochondrial respiratory chain. The mitoribosomes are attached to the mitochondrial inner membrane and translation products are cotranslationally integrated into the membrane. Required for mitochondrial protein synthesis. Has a role in mitochondrial integrity and cell respiration. This is Small ribosomal subunit protein mS45 (bot1) from Schizosaccharomyces pombe (strain 972 / ATCC 24843) (Fission yeast).